The primary structure comprises 636 residues: TNFAIP3-interacting protein 1 (636 aa).

Residues 20 to 73 (EASAAFERLVKENSRLKEKMQGIKMLGELLEESQMEATRLRQKAEELVKDNELL) adopt a coiled-coil conformation. A compositionally biased stretch (basic and acidic residues) spans 61-71 (QKAEELVKDNE). Disordered stretches follow at residues 61 to 151 (QKAE…GPLP) and 252 to 283 (MSNG…QQQA). Serine 77 is subject to Phosphoserine. Positions 94–412 (SNVTASPTAP…SPLTRQREYQ (319 aa)) are interaction with Nef. The segment covering 131-142 (EEQNSPESSSHA) has biased composition (polar residues). Positions 196–258 (SKVHKNEQRT…KLLMSNGNKE (63 aa)) form a coiled coil. Serine 284 carries the phosphoserine modification. Positions 294–535 (VALGAAEKKV…RKAKASGERY (242 aa)) form a coiled coil. Residues 351–367 (DLEAEREQKQRDFDRKL) form an interaction with Shigella flexneri ipah9.8 region. A Phosphoserine modification is found at serine 403. Residues 431-588 (TPPSSPPTAF…MEHPPPLPNS (158 aa)) are required for inhibitory activity of TNF-induced NF-kappa-B activation. Threonine 438 is modified (phosphothreonine). Position 442 is a phosphoserine (serine 442). The ubiquitin-binding domain (UBD) stretch occupies residues 452–510 (KQELVTQNELLKQQVKIFEEDFQRERSDRERMNEEKEELKKQVEKLQAQVTLSNAQLKA). Positions 524-530 (QKRKAKA) match the Nuclear localization signal motif. Tyrosine 552 bears the Phosphotyrosine mark. Arginine 571 carries the asymmetric dimethylarginine modification. Arginine 599 carries the asymmetric dimethylarginine; alternate modification. An Omega-N-methylarginine; alternate modification is found at arginine 599. The tract at residues 603–636 (GGVRNPNQSSQVMDPPTARPTEPESPKNDREGPQ) is disordered. Residues 623-636 (TEPESPKNDREGPQ) show a composition bias toward basic and acidic residues. Phosphoserine is present on serine 627.

As to quaternary structure, interacts with TNFAIP3 and IKBKG (polyubiquitinated); facilitates TNFAIP3-mediated de-ubiquitination of NEMO/IKBKG. Interacts with polyubiquitin. Interacts with MAPK1, SELPLG and PIK3CD. Interacts with IRAK1 (polyubiquitinated). Interacts with MYD88; the interaction is indicative for participation in an activated TLR-signaling complex. Interacts with HIV-1 matrix protein. Interacts with TAX1BP1. (Microbial infection) Interacts with Shigella flexneri ipah9.8; the interaction promotes polyubiquitination of IKBKG. In terms of processing, phosphorylation at Tyr-552 by SRC-family kinases recruits phosphoinositide-3-kinase (PI3K) PIK3CD:p85 heterodimer which results in integrin activation and leukocyte adhesion to activated endothelium during inflammation. As to expression, ubiquitous. Strongly expressed in peripheral blood lymphocytes, spleen and skeletal muscle, and is weakly expressed in the brain. In peripheral blood mononucleocytes, isoform 4 is mainly expressed and isoform 1 and isoform 7 are almost not expressed. Expression of isoform 1 and isoform 7 increases in leukemic cells.

The protein localises to the cytoplasm. It is found in the nucleus. In terms of biological role, inhibits NF-kappa-B activation and TNF-induced NF-kappa-B-dependent gene expression by regulating TAX1BP1 and A20/TNFAIP3-mediated deubiquitination of IKBKG; proposed to link A20/TNFAIP3 to ubiquitinated IKBKG. Involved in regulation of EGF-induced ERK1/ERK2 signaling pathway; blocks MAPK3/MAPK1 nuclear translocation and MAPK1-dependent transcription. Increases cell surface CD4(T4) antigen expression. Involved in the anti-inflammatory response of macrophages and positively regulates TLR-induced activation of CEBPB. Involved in the prevention of autoimmunity; this function implicates binding to polyubiquitin. Involved in leukocyte integrin activation during inflammation; this function is mediated by association with SELPLG and dependent on phosphorylation by SRC-family kinases. Interacts with HIV-1 matrix protein and is packaged into virions and overexpression can inhibit viral replication. May regulate matrix nuclear localization, both nuclear import of PIC (Preintegration complex) and export of GAG polyprotein and viral genomic RNA during virion production. In case of infection, promotes association of IKBKG with Shigella flexneri E3 ubiquitin-protein ligase ipah9.8 p which in turn promotes polyubiquitination of IKBKG leading to its proteasome-dependent degradation and thus is perturbing NF-kappa-B activation during bacterial infection. The protein is TNFAIP3-interacting protein 1 (TNIP1) of Homo sapiens (Human).